The primary structure comprises 227 residues: Enolase-phosphatase E1 (227 aa).

This sequence belongs to the HAD-like hydrolase superfamily. MasA/MtnC family. As to quaternary structure, monomer. It depends on Mg(2+) as a cofactor.

The catalysed reaction is 5-methylsulfanyl-2,3-dioxopentyl phosphate + H2O = 1,2-dihydroxy-5-(methylsulfanyl)pent-1-en-3-one + phosphate. It participates in amino-acid biosynthesis; L-methionine biosynthesis via salvage pathway; L-methionine from S-methyl-5-thio-alpha-D-ribose 1-phosphate: step 3/6. The protein operates within amino-acid biosynthesis; L-methionine biosynthesis via salvage pathway; L-methionine from S-methyl-5-thio-alpha-D-ribose 1-phosphate: step 4/6. Functionally, bifunctional enzyme that catalyzes the enolization of 2,3-diketo-5-methylthiopentyl-1-phosphate (DK-MTP-1-P) into the intermediate 2-hydroxy-3-keto-5-methylthiopentenyl-1-phosphate (HK-MTPenyl-1-P), which is then dephosphorylated to form the acireductone 1,2-dihydroxy-3-keto-5-methylthiopentene (DHK-MTPene). The chain is Enolase-phosphatase E1 from Methylococcus capsulatus (strain ATCC 33009 / NCIMB 11132 / Bath).